Here is a 139-residue protein sequence, read N- to C-terminus: Nucleoside diphosphate kinase (139 aa).

6 residues coordinate ATP: lysine 11, phenylalanine 59, arginine 87, threonine 93, arginine 104, and asparagine 114. Histidine 117 serves as the catalytic Pros-phosphohistidine intermediate.

The protein belongs to the NDK family. As to quaternary structure, homotetramer. Mg(2+) is required as a cofactor.

Its subcellular location is the cytoplasm. The enzyme catalyses a 2'-deoxyribonucleoside 5'-diphosphate + ATP = a 2'-deoxyribonucleoside 5'-triphosphate + ADP. The catalysed reaction is a ribonucleoside 5'-diphosphate + ATP = a ribonucleoside 5'-triphosphate + ADP. Functionally, major role in the synthesis of nucleoside triphosphates other than ATP. The ATP gamma phosphate is transferred to the NDP beta phosphate via a ping-pong mechanism, using a phosphorylated active-site intermediate. This is Nucleoside diphosphate kinase from Wolbachia pipientis subsp. Culex pipiens (strain wPip).